A 244-amino-acid polypeptide reads, in one-letter code: Ribosomal RNA large subunit methyltransferase E (244 aa).

Positions 81, 83, 109, 125, and 149 each coordinate S-adenosyl-L-methionine. The active-site Proton acceptor is K189.

It belongs to the class I-like SAM-binding methyltransferase superfamily. RNA methyltransferase RlmE family.

The protein localises to the cytoplasm. It carries out the reaction uridine(2552) in 23S rRNA + S-adenosyl-L-methionine = 2'-O-methyluridine(2552) in 23S rRNA + S-adenosyl-L-homocysteine + H(+). Specifically methylates the uridine in position 2552 of 23S rRNA at the 2'-O position of the ribose in the fully assembled 50S ribosomal subunit. The chain is Ribosomal RNA large subunit methyltransferase E from Cereibacter sphaeroides (strain ATCC 17023 / DSM 158 / JCM 6121 / CCUG 31486 / LMG 2827 / NBRC 12203 / NCIMB 8253 / ATH 2.4.1.) (Rhodobacter sphaeroides).